Here is a 162-residue protein sequence, read N- to C-terminus: 2-amino-4-hydroxy-6-hydroxymethyldihydropteridine pyrophosphokinase (162 aa).

It belongs to the HPPK family.

It carries out the reaction 6-hydroxymethyl-7,8-dihydropterin + ATP = (7,8-dihydropterin-6-yl)methyl diphosphate + AMP + H(+). The protein operates within cofactor biosynthesis; tetrahydrofolate biosynthesis; 2-amino-4-hydroxy-6-hydroxymethyl-7,8-dihydropteridine diphosphate from 7,8-dihydroneopterin triphosphate: step 4/4. Functionally, catalyzes the transfer of pyrophosphate from adenosine triphosphate (ATP) to 6-hydroxymethyl-7,8-dihydropterin, an enzymatic step in folate biosynthesis pathway. The chain is 2-amino-4-hydroxy-6-hydroxymethyldihydropteridine pyrophosphokinase (folK) from Streptococcus pyogenes serotype M3 (strain ATCC BAA-595 / MGAS315).